Reading from the N-terminus, the 544-residue chain is GMP synthase [glutamine-hydrolyzing] (544 aa).

Positions 12–210 (TILILDFGSQ…VKNVCSVRDG (199 aa)) constitute a Glutamine amidotransferase type-1 domain. The active-site Nucleophile is the Cys-88. Active-site residues include His-184 and Glu-186. The 209-residue stretch at 211 to 419 (WSMESFIPKE…LNIPEHLVGR (209 aa)) folds into the GMPS ATP-PPase domain. 239 to 245 (SGGVDST) serves as a coordination point for ATP. XMP-binding residues include Arg-312, Asp-481, Lys-536, and Glu-542.

As to quaternary structure, homodimer. Also forms a small population of homotetramers. The cofactor is Mg(2+).

It is found in the cytoplasm. It localises to the cytosol. The catalysed reaction is XMP + L-glutamine + ATP + H2O = GMP + L-glutamate + AMP + diphosphate + 2 H(+). It functions in the pathway purine metabolism; GMP biosynthesis; GMP from XMP (L-Gln route): step 1/1. Catalyzes the conversion of xanthine monophosphate (XMP) to GMP in the presence of glutamine and ATP through an adenyl-XMP intermediate. The chain is GMP synthase [glutamine-hydrolyzing] from Cryptococcus neoformans var. neoformans serotype D (strain JEC21 / ATCC MYA-565) (Filobasidiella neoformans).